We begin with the raw amino-acid sequence, 286 residues long: ATP synthase gamma chain (286 aa).

This sequence belongs to the ATPase gamma chain family. As to quaternary structure, F-type ATPases have 2 components, CF(1) - the catalytic core - and CF(0) - the membrane proton channel. CF(1) has five subunits: alpha(3), beta(3), gamma(1), delta(1), epsilon(1). CF(0) has three main subunits: a, b and c.

The protein resides in the cell inner membrane. Its function is as follows. Produces ATP from ADP in the presence of a proton gradient across the membrane. The gamma chain is believed to be important in regulating ATPase activity and the flow of protons through the CF(0) complex. The chain is ATP synthase gamma chain from Pseudomonas fluorescens (strain ATCC BAA-477 / NRRL B-23932 / Pf-5).